The chain runs to 94 residues: Putative pterin-4-alpha-carbinolamine dehydratase (94 aa).

The protein belongs to the pterin-4-alpha-carbinolamine dehydratase family.

It carries out the reaction (4aS,6R)-4a-hydroxy-L-erythro-5,6,7,8-tetrahydrobiopterin = (6R)-L-erythro-6,7-dihydrobiopterin + H2O. This is Putative pterin-4-alpha-carbinolamine dehydratase from Caulobacter vibrioides (strain ATCC 19089 / CIP 103742 / CB 15) (Caulobacter crescentus).